Reading from the N-terminus, the 249-residue chain is Small ribosomal subunit protein uS2 (249 aa).

This sequence belongs to the universal ribosomal protein uS2 family.

The protein is Small ribosomal subunit protein uS2 of Chlorobaculum tepidum (strain ATCC 49652 / DSM 12025 / NBRC 103806 / TLS) (Chlorobium tepidum).